The primary structure comprises 253 residues: Small ribosomal subunit protein uS3 (253 aa).

Residues 38-106 enclose the KH type-2 domain; that stretch reads IRKYIHARLS…EVQINIFEIK (69 aa). A disordered region spans residues 216 to 253; it reads AGMDKKQAGQGGGKGGDSPRGDRKPFNKGGKPDARKRK. Basic and acidic residues predominate over residues 232-253; it reads DSPRGDRKPFNKGGKPDARKRK.

The protein belongs to the universal ribosomal protein uS3 family. As to quaternary structure, part of the 30S ribosomal subunit. Forms a tight complex with proteins S10 and S14.

Its function is as follows. Binds the lower part of the 30S subunit head. Binds mRNA in the 70S ribosome, positioning it for translation. This is Small ribosomal subunit protein uS3 from Flavobacterium psychrophilum (strain ATCC 49511 / DSM 21280 / CIP 103535 / JIP02/86).